We begin with the raw amino-acid sequence, 591 residues long: L-fucose isomerase (591 aa).

Active-site proton acceptor residues include Glu-338 and Asp-362. The Mn(2+) site is built by Glu-338, Asp-362, and His-529.

This sequence belongs to the L-fucose isomerase family. Requires Mn(2+) as cofactor.

The protein resides in the cytoplasm. It carries out the reaction L-fucose = L-fuculose. Its pathway is carbohydrate degradation; L-fucose degradation; L-lactaldehyde and glycerone phosphate from L-fucose: step 1/3. In terms of biological role, converts the aldose L-fucose into the corresponding ketose L-fuculose. The sequence is that of L-fucose isomerase from Phocaeicola vulgatus (strain ATCC 8482 / DSM 1447 / JCM 5826 / CCUG 4940 / NBRC 14291 / NCTC 11154) (Bacteroides vulgatus).